Reading from the N-terminus, the 524-residue chain is Serine/threonine-protein kinase PAK 2 (524 aa).

Residues 1–81 (MSDNGELEDK…PEISPPSDFE (81 aa)) form a disordered region. Ser2 bears the N-acetylserine mark. 4 positions are modified to phosphoserine: Ser2, Ser20, Ser55, and Ser58. Thr60 carries the post-translational modification Phosphothreonine. Position 62 is an N6-acetyllysine (Lys62). A Phosphoserine modification is found at Ser64. Positions 67–81 (KEKERPEISPPSDFE) are enriched in basic and acidic residues. Positions 69 to 112 (KERPEISPPSDFEHTIHVGFDAVTGEFTGMPEQWARLLQTSNIT) are GTPase-binding. Positions 69–137 (KERPEISPPS…KFYDSNTVKQ (69 aa)) are autoregulatory region. One can recognise a CRIB domain in the interval 74 to 87 (ISPPSDFEHTIHVG). The tract at residues 88–248 (FDAVTGEFTG…IVSIGDPKKK (161 aa)) is linker. Lys128 carries the N6-acetyllysine modification. At Thr134 the chain carries Phosphothreonine. Residue Tyr139 is modified to Phosphotyrosine. Ser141 carries the phosphoserine modification. Thr143 is subject to Phosphothreonine. Ser152 carries the post-translational modification Phosphoserine. Thr159 and Thr169 each carry phosphothreonine. Residues 169-178 (TEEDDDDEEA) are compositionally biased toward acidic residues. The disordered stretch occupies residues 169-188 (TEEDDDDEEAAPPVIAPRPD). Ser197 carries the phosphoserine modification. Residues 204-228 (APVGDSHVDSGAKSSDKQKKKTKMT) form a disordered region. Residues 209–228 (SHVDSGAKSSDKQKKKTKMT) show a composition bias toward basic and acidic residues. The Nuclear localization signal motif lies at 245–251 (PKKKYTR). A Protein kinase domain is found at 249 to 500 (YTRYEKIGQG…AKELLQHPFL (252 aa)). Residues 255 to 263 (IGQGASGTV) and Lys278 each bind ATP. Asp368 acts as the Proton acceptor in catalysis. Phosphothreonine; by autocatalysis is present on Thr402.

As to quaternary structure, interacts tightly with GTP-bound but not GDP-bound CDC42/p21 and RAC1. Interacts with SH3MD4. Interacts with SCRIB. Interacts with ARHGEF7 and GIT1. PAK-2p34 interacts with ARHGAP10. Interacts with RAC1. Post-translationally, full-length PAK2 is autophosphorylated when activated by CDC42/p21. Following cleavage, both peptides, PAK-2p27 and PAK-2p34, become highly autophosphorylated. Autophosphorylation of PAK-2p27 can occur in the absence of any effectors and is dependent on phosphorylation of Thr-402, because PAK-2p27 is acting as an exogenous substrate. During apoptosis proteolytically cleaved by caspase-3 or caspase-3-like proteases to yield active PAK-2p34. In terms of processing, ubiquitinated, leading to its proteasomal degradation.

It localises to the cytoplasm. It is found in the nucleus. The protein localises to the perinuclear region. The protein resides in the membrane. The enzyme catalyses L-seryl-[protein] + ATP = O-phospho-L-seryl-[protein] + ADP + H(+). It catalyses the reaction L-threonyl-[protein] + ATP = O-phospho-L-threonyl-[protein] + ADP + H(+). Its activity is regulated as follows. Activated by binding small G proteins. Binding of GTP-bound CDC42 or RAC1 to the autoregulatory region releases monomers from the autoinhibited dimer, enables phosphorylation of Thr-402 and allows the kinase domain to adopt an active structure. Following caspase cleavage, autophosphorylated PAK-2p34 is constitutively active. Serine/threonine protein kinase that plays a role in a variety of different signaling pathways including cytoskeleton regulation, cell motility, cell cycle progression, apoptosis or proliferation. Acts as a downstream effector of the small GTPases CDC42 and RAC1. Activation by the binding of active CDC42 and RAC1 results in a conformational change and a subsequent autophosphorylation on several serine and/or threonine residues. Full-length PAK2 stimulates cell survival and cell growth. Phosphorylates MAPK4 and MAPK6 and activates the downstream target MAPKAPK5, a regulator of F-actin polymerization and cell migration. Phosphorylates JUN and plays an important role in EGF-induced cell proliferation. Phosphorylates many other substrates including histone H4 to promote assembly of H3.3 and H4 into nucleosomes, BAD, ribosomal protein S6, or MBP. Phosphorylates CASP7, thereby preventing its activity. Additionally, associates with ARHGEF7 and GIT1 to perform kinase-independent functions such as spindle orientation control during mitosis. On the other hand, apoptotic stimuli such as DNA damage lead to caspase-mediated cleavage of PAK2, generating PAK-2p34, an active p34 fragment that translocates to the nucleus and promotes cellular apoptosis involving the JNK signaling pathway. Caspase-activated PAK2 phosphorylates MKNK1 and reduces cellular translation. The polypeptide is Serine/threonine-protein kinase PAK 2 (PAK2) (Oryctolagus cuniculus (Rabbit)).